The chain runs to 619 residues: Tyrosine-protein kinase ZAP-70 (619 aa).

The region spanning 10–102 is the SH2 1 domain; that stretch reads FFYGSISRAE…GLPCNLRKPC (93 aa). Positions 103–162 are interdomain A; the sequence is NRPSGLEPQPGVFDCLRDAMVRDYVRQTWKLEGEALEQAIISQAPQVEKLIATTAHERMP. Positions 163–254 constitute an SH2 2 domain; that stretch reads WYHSSLTREE…GLIYCLKEAC (92 aa). Y248 is subject to Phosphotyrosine. The segment at 255–337 is interdomain B; that stretch reads PNSSASNASG…KKLFLKRDNL (83 aa). The tract at residues 260–309 is disordered; the sequence is SNASGAAAPTLPAHPSTLTHPQRRIDTLNSDGYTPEPARITSPDKPRPMP. S289 is modified (phosphoserine). Y292 is subject to Phosphotyrosine. Y315 carries the post-translational modification Phosphotyrosine; by LCK. At Y319 the chain carries Phosphotyrosine. A Protein kinase domain is found at 338 to 600; sequence LIADIELGCG…QRMRACYYSL (263 aa). Residues 345 to 352 and K369 each bind ATP; that span reads GCGNFGSV. Catalysis depends on D461, which acts as the Proton acceptor. Phosphotyrosine occurs at positions 492 and 493. K544 participates in a covalent cross-link: Glycyl lysine isopeptide (Lys-Gly) (interchain with G-Cter in ubiquitin). K603 is modified (N6-acetyllysine).

The protein belongs to the protein kinase superfamily. Tyr protein kinase family. SYK/ZAP-70 subfamily. Interacts with CD247/CD3Z; this interaction docks ZAP70 at the stimulated TCR. Interacts with NFAM1. Interacts with adapter protein SLA; this interaction negatively regulates T-cell receptor signaling. Interacts with FCRL3. Interacts with VAV1. Interacts with CBL; this interaction promotes ubiquitination, internalization and subsequent degradation of CD247/CD3Z. Identified in a complex with CBL and UBE2L3. Interacts with SHB. Interacts with adapter protein SLA2; this interaction negatively regulates T-cell receptor signaling. Interacts with CBLB. Interacts (via SH2 domains) with RHOH; this interaction regulates ZAP70 subcellular localization. Interacts with DEF6. Interacts (ubiquitinated form) with OTUD7B and UBASH3B. Phosphorylated on tyrosine residues upon T-cell antigen receptor (TCR) stimulation. Phosphorylation of Tyr-315 and Tyr-319 are essential for ZAP70 positive function on T-lymphocyte activation whereas Tyr-292 has a negative regulatory role. Within the C-terminal kinase domain, Tyr-492 and Tyr-493 are phosphorylated after TCR induction, Tyr-492 playing a negative regulatory role and Tyr-493 a positive. Tyr-493 is dephosphorylated by PTN22. Post-translationally, ubiquitinated in response to T cell activation. Deubiquitinated by OTUD7B. As to expression, expressed in T- and natural killer cells. Also present in early thymocytes and pro/pre B-cells.

It localises to the cytoplasm. The protein resides in the cell membrane. It catalyses the reaction L-tyrosyl-[protein] + ATP = O-phospho-L-tyrosyl-[protein] + ADP + H(+). Activated by phosphorylation at Tyr-493 in the activation loop. Inhibited by staurosporine. In terms of biological role, tyrosine kinase that plays an essential role in regulation of the adaptive immune response. Regulates motility, adhesion and cytokine expression of mature T-cells, as well as thymocyte development. Also contributes to the development and activation of primary B-lymphocytes. When antigen presenting cells (APC) activate T-cell receptor (TCR), a serie of phosphorylations lead to the recruitment of ZAP70 to the doubly phosphorylated TCR component CD247/CD3Z through ITAM motif at the plasma membrane. This recruitment serves to localization to the stimulated TCR and to relieve its autoinhibited conformation. Release of ZAP70 active conformation is further stabilized by phosphorylation mediated by LCK. Subsequently, ZAP70 phosphorylates at least 2 essential adapter proteins: LAT and LCP2. In turn, a large number of signaling molecules are recruited and ultimately lead to lymphokine production, T-cell proliferation and differentiation. Furthermore, ZAP70 controls cytoskeleton modifications, adhesion and mobility of T-lymphocytes, thus ensuring correct delivery of effectors to the APC. ZAP70 is also required for TCR-CD247/CD3Z internalization and degradation through interaction with the E3 ubiquitin-protein ligase CBL and adapter proteins SLA and SLA2. Thus, ZAP70 regulates both T-cell activation switch on and switch off by modulating TCR expression at the T-cell surface. During thymocyte development, ZAP70 promotes survival and cell-cycle progression of developing thymocytes before positive selection (when cells are still CD4/CD8 double negative). Additionally, ZAP70-dependent signaling pathway may also contribute to primary B-cells formation and activation through B-cell receptor (BCR). The sequence is that of Tyrosine-protein kinase ZAP-70 (ZAP70) from Homo sapiens (Human).